A 262-amino-acid polypeptide reads, in one-letter code: Global transcriptional regulator CodY (262 aa).

Residues M1–L159 form a GAF domain region. Positions A207–R226 form a DNA-binding region, H-T-H motif.

The protein belongs to the CodY family.

The protein resides in the cytoplasm. DNA-binding global transcriptional regulator which is involved in the adaptive response to starvation and acts by directly or indirectly controlling the expression of numerous genes in response to nutrient availability. During rapid exponential growth, CodY is highly active and represses genes whose products allow adaptation to nutrient depletion. This Streptococcus pneumoniae (strain ATCC BAA-255 / R6) protein is Global transcriptional regulator CodY.